The following is a 594-amino-acid chain: MQHQVKACGDSKSTTRSLQGNRRSGAASLKKPSGNGTFLATDVTNLDMNSSFLSKKLKRNGNPVIGMNIQSSNAFLGAQLAANNFNFAQQLNHAALYNNLEFQMAVASGDVPSLMSMPAHKPSLSVSSIDPSMDMSQFTEELNAIQNMSYSPMMPSSAALQSIFAANDSSAISPYMNLQKTSLLPTSTLRVSGARKNRIVEVKTLNDRMVIVSIDPQATASTRPNIIPLNRPLMSVAQNCIDMTKKRPLSAEALYSRKVFIGGLPIDVAEEEVWATFGAFGKVLVDWPRRPEHNNGRGGDNMYEVEMGRRNLRSVSGYVFLVFTNERSVQELVNACEFYENKYYLQLSSPTMSDKAVQVRPWRLSDIDYFCDDSCSVDHRRTVFIGGVPRPTRASDLASSLQDYYGKVSYVGIDIDPELKYPKGAARVTFANSQSFVRAISGRFVQVTHAETNKRVEIKPYVMEDQHCDECQGVLCKHNYAPYFCGDSSCLQYYCEACWDRMHYIVCDSRADHRPMVRTGDQTRILPRPPHHQSSHYSPRSHQMMNHDSMESSNQSRGNTSSIISRIVNRNSAASVMDRQTTKPFAATPAVIGY.

The disordered stretch occupies residues 1-33 (MQHQVKACGDSKSTTRSLQGNRRSGAASLKKPS). Positions 11-22 (SKSTTRSLQGNR) are enriched in polar residues. 2 consecutive RRM domains span residues 257-364 (RKVF…PWRL) and 381-452 (RTVF…HAET). Positions 519-560 (TGDQTRILPRPPHHQSSHYSPRSHQMMNHDSMESSNQSRGNT) are disordered. A compositionally biased stretch (polar residues) spans 535-560 (SHYSPRSHQMMNHDSMESSNQSRGNT).

As to quaternary structure, interacts with fbf-1.

Functionally, cytoplasmic polyadenylation element binding protein that binds to and regulates the translation of specific mRNAs. Essential for progression through meiosis. Involved in spermatogenesis. The chain is Cytoplasmic polyadenylation element-binding protein 1 (cpb-1) from Caenorhabditis remanei (Caenorhabditis vulgaris).